The following is a 270-amino-acid chain: MLLNVLRICIIVCLVNDGAGKHSEGRERTKTYSLNSRGYFRKERGARRSKILLVNTKGLDEPHIGHGDFGLVAELFDSTRTHTNRKEPDMNKVKLFSTVAHGNKSARRKAYNGSRRNIFSRRSFDKRNTEVTEKPGAKMFWNNFLVKMNGAPQNTSHGSKAQEIMKEACKTLPFTQNIVHENCDRMVIQNNLCFGKCISLHVPNQQDRRNTCSHCLPSKFTLNHLTLNCTGSKNVVKVVMMVEECTCEAHKSNFHQTAQFNMDTSTTLHH.

Residues 1 to 20 (MLLNVLRICIIVCLVNDGAG) form the signal peptide. N-linked (GlcNAc...) asparagine glycosylation is found at asparagine 103, asparagine 112, and asparagine 154. 4 cysteine pairs are disulfide-bonded: cysteine 169–cysteine 215, cysteine 183–cysteine 229, cysteine 193–cysteine 245, and cysteine 197–cysteine 247. One can recognise a CTCK domain in the interval 169 to 253 (CKTLPFTQNI…ECTCEAHKSN (85 aa)). Asparagine 228 is a glycosylation site (N-linked (GlcNAc...) asparagine).

Belongs to the DAN family. As to quaternary structure, the long chain interacts with nodal/nr-1, bmp4 and wnt8, thereby inhibiting their function. The short chain interacts with nodal/nr-1 but not bmp4 or wnt8. In terms of tissue distribution, a component of the Nieuwkoop signaling center in the blastula. Expressed transiently in a broad anterior domain of the gastrula, including the anterior endoderm of the Spemann's organizer and more laterally the cardiac primordia. Expression is excluded from the prospective prechordal plate region and the ring of cells that give rise to the trunk-tail mesoderm.

The protein resides in the secreted. Inhibits wnt, nodal/nr-1 and bmp signaling in the embryo to promote head formation and anterior neural induction. Within the endoderm, acts as an essential mediator of nodal/nr-1-induced cardiogenesis in the overlying mesoderm. The sequence is that of Cerberus from Xenopus laevis (African clawed frog).